The following is a 380-amino-acid chain: Cytochrome b (380 aa).

Helical transmembrane passes span 34-54 (FGSL…LLAM), 78-99 (WLIR…YMHI), 114-134 (WNTG…GYVL), and 179-199 (FFAL…IHLT). Heme b contacts are provided by histidine 84 and histidine 98. The heme b site is built by histidine 183 and histidine 197. Position 202 (histidine 202) interacts with a ubiquinone. 4 consecutive transmembrane segments (helical) span residues 227–247 (SKDI…ALFS), 289–309 (LGGV…PFLH), 321–341 (LSQM…WIGS), and 348–368 (FIII…ILLP).

Belongs to the cytochrome b family. As to quaternary structure, the cytochrome bc1 complex contains 11 subunits: 3 respiratory subunits (MT-CYB, CYC1 and UQCRFS1), 2 core proteins (UQCRC1 and UQCRC2) and 6 low-molecular weight proteins (UQCRH/QCR6, UQCRB/QCR7, UQCRQ/QCR8, UQCR10/QCR9, UQCR11/QCR10 and a cleavage product of UQCRFS1). This cytochrome bc1 complex then forms a dimer. Heme b is required as a cofactor.

It is found in the mitochondrion inner membrane. Component of the ubiquinol-cytochrome c reductase complex (complex III or cytochrome b-c1 complex) that is part of the mitochondrial respiratory chain. The b-c1 complex mediates electron transfer from ubiquinol to cytochrome c. Contributes to the generation of a proton gradient across the mitochondrial membrane that is then used for ATP synthesis. This is Cytochrome b (MT-CYB) from Caracara plancus (Southern caracara).